A 213-amino-acid polypeptide reads, in one-letter code: Citrate synthase, mitochondrial (213 aa).

Residue H74 is part of the active site. N6-acetyllysine; alternate is present on residues K94 and K100. 2 positions are modified to N6-succinyllysine; alternate: K94 and K100. Residue H120 is part of the active site. R129 serves as a coordination point for oxaloacetate. At K148 the chain carries N6-acetyllysine; alternate. Position 148 is an N6-succinyllysine; alternate (K148). K155 carries the post-translational modification N6-acetyllysine. K166 carries the N6-acetyllysine; alternate modification. K166 is modified (N6-succinyllysine; alternate). An N6,N6,N6-trimethyllysine modification is found at K168. D175 is a catalytic residue. Residue R201 coordinates oxaloacetate.

The protein belongs to the citrate synthase family. In terms of assembly, homodimer. In terms of processing, in response to mitochondrial stress, the precursor protein is ubiquitinated by the SIFI complex in the cytoplasm before mitochondrial import, leading to its degradation. Within the SIFI complex, UBR4 initiates ubiquitin chain that are further elongated or branched by KCMF1.

The protein resides in the mitochondrion matrix. It carries out the reaction oxaloacetate + acetyl-CoA + H2O = citrate + CoA + H(+). It participates in carbohydrate metabolism; tricarboxylic acid cycle; isocitrate from oxaloacetate: step 1/2. Key enzyme of the Krebs tricarboxylic acid cycle which catalyzes the synthesis of citrate from acetyl coenzyme A and oxaloacetate. This Mesocricetus auratus (Golden hamster) protein is Citrate synthase, mitochondrial.